Here is a 32-residue protein sequence, read N- to C-terminus: Conotoxin Cltx-4 (32 aa).

A 4-hydroxyproline mark is found at P2, P24, P28, and P30. Residue S32 is modified to Serine amide.

Post-translationally, contains 4 disulfide bonds. In terms of tissue distribution, expressed by the venom duct.

The protein localises to the secreted. The protein is Conotoxin Cltx-4 of Californiconus californicus (California cone).